The following is a 286-amino-acid chain: 3-methyl-2-oxobutanoate hydroxymethyltransferase (286 aa).

2 residues coordinate Mg(2+): Asp-51 and Asp-90. 3-methyl-2-oxobutanoate-binding positions include 51–52, Asp-90, and Lys-120; that span reads DS. Glu-122 lines the Mg(2+) pocket. Glu-189 acts as the Proton acceptor in catalysis. A disordered region spans residues 263–286; sequence TFPGPSHVFSGSKASSDLNGGDES.

This sequence belongs to the PanB family. In terms of assembly, homodecamer; pentamer of dimers. Requires Mg(2+) as cofactor.

Its subcellular location is the cytoplasm. The enzyme catalyses 3-methyl-2-oxobutanoate + (6R)-5,10-methylene-5,6,7,8-tetrahydrofolate + H2O = 2-dehydropantoate + (6S)-5,6,7,8-tetrahydrofolate. Its pathway is cofactor biosynthesis; (R)-pantothenate biosynthesis; (R)-pantoate from 3-methyl-2-oxobutanoate: step 1/2. Functionally, catalyzes the reversible reaction in which hydroxymethyl group from 5,10-methylenetetrahydrofolate is transferred onto alpha-ketoisovalerate to form ketopantoate. The chain is 3-methyl-2-oxobutanoate hydroxymethyltransferase from Mesorhizobium japonicum (strain LMG 29417 / CECT 9101 / MAFF 303099) (Mesorhizobium loti (strain MAFF 303099)).